Here is a 572-residue protein sequence, read N- to C-terminus: Proline--tRNA ligase (572 aa).

The protein belongs to the class-II aminoacyl-tRNA synthetase family. ProS type 1 subfamily. In terms of assembly, homodimer.

It is found in the cytoplasm. It catalyses the reaction tRNA(Pro) + L-proline + ATP = L-prolyl-tRNA(Pro) + AMP + diphosphate. Functionally, catalyzes the attachment of proline to tRNA(Pro) in a two-step reaction: proline is first activated by ATP to form Pro-AMP and then transferred to the acceptor end of tRNA(Pro). As ProRS can inadvertently accommodate and process non-cognate amino acids such as alanine and cysteine, to avoid such errors it has two additional distinct editing activities against alanine. One activity is designated as 'pretransfer' editing and involves the tRNA(Pro)-independent hydrolysis of activated Ala-AMP. The other activity is designated 'posttransfer' editing and involves deacylation of mischarged Ala-tRNA(Pro). The misacylated Cys-tRNA(Pro) is not edited by ProRS. The chain is Proline--tRNA ligase from Buchnera aphidicola subsp. Acyrthosiphon pisum (strain 5A).